Consider the following 380-residue polypeptide: Cytoplasmic protein NCK2 (380 aa).

The residue at position 2 (Thr2) is an N-acetylthreonine. Residues 2-61 form the SH3 1 domain; it reads TEEVIVIAKWDYTAQQDQELDIKKNERLWLLDDSKTWWRVRNAANRTGYVPSNYVERKNS. A disordered region spans residues 79–102; that stretch reads KTRRKTSARDASPTPSTDAEYPAN. Ser90 is modified (phosphoserine). Thr92 bears the Phosphothreonine mark. At Ser94 the chain carries Phosphoserine. A Phosphotyrosine modification is found at Tyr110. 2 consecutive SH3 domains span residues 111-170 and 195-257; these read DLNI…EEVD and RVLH…VLSD. Positions 285 to 380 constitute an SH2 domain; sequence WYYGNVTRHQ…EKLYLVRALQ (96 aa).

Interacts with DOCK1, LIMS1 and TGFB1I1. Part of a complex containing PPP1R15B, PP1 and NCK2. Interacts with FASLG. Interacts with AXL. Interacts with PAK1, PKN2 and SOS1. Interacts (via SH2 domain) with EGFR. Interacts (via SH2 domain) with DDR1. Interacts with IRS1. Post-translationally, phosphorylated. Ubiquitous.

It localises to the cytoplasm. Its subcellular location is the endoplasmic reticulum. In terms of biological role, adapter protein which associates with tyrosine-phosphorylated growth factor receptors or their cellular substrates. Maintains low levels of EIF2S1 phosphorylation by promoting its dephosphorylation by PP1. Plays a role in ELK1-dependent transcriptional activation in response to activated Ras signaling. This Homo sapiens (Human) protein is Cytoplasmic protein NCK2 (NCK2).